A 359-amino-acid chain; its full sequence is Protein Wnt-5a (359 aa).

The N-terminal stretch at 1–20 (MASRYLTLAAALLASFLQVD) is a signal peptide. Cys-83 and Cys-94 are oxidised to a cystine. Asn-93 and Asn-99 each carry an N-linked (GlcNAc...) asparagine glycan. 10 cysteine pairs are disulfide-bonded: Cys-133–Cys-141, Cys-143–Cys-161, Cys-217–Cys-231, Cys-219–Cys-226, Cys-288–Cys-319, Cys-304–Cys-314, Cys-318–Cys-358, Cys-334–Cys-349, Cys-336–Cys-346, and Cys-341–Cys-342. Ser-223 carries O-palmitoleoyl serine; by PORCN lipidation. 2 N-linked (GlcNAc...) asparagine glycosylation sites follow: Asn-291 and Asn-305.

It belongs to the Wnt family. Palmitoleoylation is required for efficient binding to frizzled receptors. Depalmitoleoylation leads to Wnt signaling pathway inhibition.

The protein localises to the secreted. It is found in the extracellular space. Its subcellular location is the extracellular matrix. Functionally, ligand for members of the frizzled family of seven transmembrane receptors. Can activate or inhibit canonical Wnt signaling, depending on receptor context. Required during embryogenesis for extension of the primary anterior-posterior axis. This chain is Protein Wnt-5a (WNT5A), found in Pleurodeles waltl (Iberian ribbed newt).